Here is a 357-residue protein sequence, read N- to C-terminus: Protein phosphatase 1 regulatory subunit 42 (357 aa).

LRR repeat units lie at residues 29–50 (KITHINFSDRNIDSIDDLSLCR), 51–72 (NLSVLYLYDNRISQVTNLNYTT), 73–94 (NLTHLYLQNNCISCIENLSSLK), 95–116 (KLEKLYLGGNYIAVIEGLEGLE), 117–138 (ELRELHVESQRLPLGEKLLFDP), 147–168 (SLSTLNISNNNIDDIKDLEILE), and 169–190 (NLNHLIAVDNQLMHVKDLELLL). Residues 204 to 242 (NPVCLKPKYRDKLILTSKSLEFLDGKEIKDMERQFLMNW) enclose the LRRCT domain. The tract at residues 329–357 (ESSLTKNDIHEPHLLQNPKVKENLSEKKE) is disordered. Over residues 335 to 357 (NDIHEPHLLQNPKVKENLSEKKE) the composition is skewed to basic and acidic residues.

As to quaternary structure, interacts with PPP1CC isoform gamma-2; the interaction is direct. Interacts with actin, dynein, KIF5B, KIFC1 and tubulin. Associates with microtubules. Phosphorylated; during the first round of spermatogenesis with a marginal increase at 21 days after birth. Testis-specific. Expressed in spermatids (at protein level). Testis-specific.

Its subcellular location is the cytoplasm. The protein localises to the cytoskeleton. The protein resides in the microtubule organizing center. It localises to the centrosome. Its function is as follows. Regulates phosphatase activity of protein phosphatase 1 (PP1) complexes in the testis. In Mus musculus (Mouse), this protein is Protein phosphatase 1 regulatory subunit 42 (Ppp1r42).